Consider the following 251-residue polypeptide: MGDTGTLVLLRHGESDWNARNLFTGWVDVGLTEKGRAEAVRSGELLAEQDLLPDVLYTSLLRRAITTAHLALDSADRLWIPVRRSWRLNERHYGALQGLDKAETKARYGEEQFMAWRRSYDTPPPLIEKGSEFSQDADPRYANIDGGPLTECLADVVARFLPYFTDVIVGDLRAGKTVLIVAHGNSLRALVKHLDHMSDEDIVGLNIPTGIPLRYDLDERLQPVVPGGTYLDPEAAAAGAAAVASQGAAKA.

Residues 11-18 (RHGESDWN), 24-25 (TG), R63, 90-93 (ERHY), K101, 117-118 (RR), and 184-185 (GN) contribute to the substrate site. H12 functions as the Tele-phosphohistidine intermediate in the catalytic mechanism. E90 functions as the Proton donor/acceptor in the catalytic mechanism.

Belongs to the phosphoglycerate mutase family. BPG-dependent PGAM subfamily.

The catalysed reaction is (2R)-2-phosphoglycerate = (2R)-3-phosphoglycerate. It functions in the pathway carbohydrate degradation; glycolysis; pyruvate from D-glyceraldehyde 3-phosphate: step 3/5. Catalyzes the interconversion of 2-phosphoglycerate and 3-phosphoglycerate. In Mycobacterium marinum (strain ATCC BAA-535 / M), this protein is 2,3-bisphosphoglycerate-dependent phosphoglycerate mutase.